A 248-amino-acid chain; its full sequence is tRNA N(3)-methylcytidine methyltransferase trm141 (248 aa).

S-adenosyl-L-methionine-binding residues include W23, Y27, G63, D86, D112, and I133.

The protein belongs to the methyltransferase superfamily. METL family.

It is found in the cytoplasm. The protein localises to the nucleus. The enzyme catalyses cytidine(32) in tRNA(Ser) + S-adenosyl-L-methionine = N(3)-methylcytidine(32) in tRNA(Ser) + S-adenosyl-L-homocysteine + H(+). Functionally, S-adenosyl-L-methionine-dependent methyltransferase that mediates N(3)-methylcytidine modification of residue 32 of the tRNA anticodon loop of tRNA(Ser). N(3)-methylcytidine methylation by trm141 requires the formation of N(6)-dimethylallyladenosine(37) (i6A37) by tit1 as prerequisite. Does not catalyze N(3)-methylcytidine modification of tRNA(Thr). This is tRNA N(3)-methylcytidine methyltransferase trm141 from Schizosaccharomyces pombe (strain 972 / ATCC 24843) (Fission yeast).